We begin with the raw amino-acid sequence, 301 residues long: Aquaporin-10 (301 aa).

Residues Met1 to Arg22 lie on the Cytoplasmic side of the membrane. Residues Gln23–Ala41 form a helical membrane-spanning segment. Topologically, residues Val42–Phe55 are extracellular. Residues Phe56–Asn75 traverse the membrane as a helical segment. Residues Val76 to Ser77 are Cytoplasmic-facing. The discontinuously helical intramembrane region spans Gly78–Cys90. The short motif at Asn82–Ala84 is the NPA 1 element. The Cytoplasmic segment spans residues Ile91–Pro96. The chain crosses the membrane as a helical span at residues Trp97–Leu121. At Tyr122–Asn158 the chain is on the extracellular side. N-linked (GlcNAc...) asparagine glycans are attached at residues Asn128 and Asn133. Residues Gly159–Ala176 form a helical membrane-spanning segment. Topologically, residues Ile177–Gly188 are cytoplasmic. A helical transmembrane segment spans residues Leu189–Met205. Over Gly206–Asn208 the chain is Extracellular. The discontinuously helical intramembrane region spans Cys209–Leu223. Residues Asn214–Ala216 carry the NPA 2 motif. Topologically, residues Phe224–Trp241 are extracellular. Residues Trp242 to Leu262 traverse the membrane as a helical segment. At Leu263–Leu301 the chain is on the cytoplasmic side.

This sequence belongs to the MIP/aquaporin (TC 1.A.8) family. As to quaternary structure, homotetramer; each monomer provides an independent glycerol/water pore. N-glycosylation at Asn-133 increases the stability of the protein but has no effect on its activity. Detected in epithelial cells on villi in the ileum, and also in stomach, jejunum, colon, rectum, white adipose tissue and placenta (at protein level). Expressed in duodenum and jejunum. Highest expression in absorptive epithelial cells at the tips of villi in the jejunum. Detected in subcutaneous adipose tissue.

It localises to the apical cell membrane. Its subcellular location is the cell membrane. The protein localises to the lipid droplet. The catalysed reaction is glycerol(in) = glycerol(out). The enzyme catalyses H2O(in) = H2O(out). It catalyses the reaction urea(in) = urea(out). Its activity is regulated as follows. Glycerol transport is regulated by pH, with the porin being permeable to glycerol at pH 5.5 but not at pH 7.4. Water permeability, however, is not influenced by pH. In terms of biological role, aquaglyceroporins form homotetrameric transmembrane channels, with each monomer independently mediating glycerol and water transport across the plasma membrane along their osmotic gradient. Could also be permeable to urea. Among aquaglyceroporins, it exhibits a unique pH-gated glycerol transport activity, being more active at acidic pH. It most likely plays a central role in the efflux of glycerol formed during triglyceride hydrolysis in adipocytes and in glycerol uptake by enterocytes, as both processes occur and are stimulated at acidic pH. The polypeptide is Aquaporin-10 (Homo sapiens (Human)).